The primary structure comprises 83 residues: MAHKRSSGAGRNGRDSNPKYLGVKRGENAFVRAGTIIIRQRGTKIHPGQNVGMGRDFTLYALIDGKVHFETRNNRKYVSVYAE.

Residues 1–21 form a disordered region; sequence MAHKRSSGAGRNGRDSNPKYL.

The protein belongs to the bacterial ribosomal protein bL27 family.

The polypeptide is Large ribosomal subunit protein bL27 (Kosmotoga olearia (strain ATCC BAA-1733 / DSM 21960 / TBF 19.5.1)).